The following is a 709-amino-acid chain: Elongation factor G (709 aa).

One can recognise a tr-type G domain in the interval 9 to 295 (AKVRNIGIMA…AVVRYLPTPL (287 aa)). GTP is bound by residues 18–25 (AHIDAGKT), 86–90 (DTPGH), and 140–143 (NKLD).

Belongs to the TRAFAC class translation factor GTPase superfamily. Classic translation factor GTPase family. EF-G/EF-2 subfamily.

The protein resides in the cytoplasm. Functionally, catalyzes the GTP-dependent ribosomal translocation step during translation elongation. During this step, the ribosome changes from the pre-translocational (PRE) to the post-translocational (POST) state as the newly formed A-site-bound peptidyl-tRNA and P-site-bound deacylated tRNA move to the P and E sites, respectively. Catalyzes the coordinated movement of the two tRNA molecules, the mRNA and conformational changes in the ribosome. This Streptomyces avermitilis (strain ATCC 31267 / DSM 46492 / JCM 5070 / NBRC 14893 / NCIMB 12804 / NRRL 8165 / MA-4680) protein is Elongation factor G.